The chain runs to 74 residues: O-conotoxin GeXXXIA (74 aa).

Residues 1 to 22 form the signal peptide; that stretch reads MKLTCVLIITVLFLTACQLTTA. A propeptide spanning residues 23 to 33 is cleaved from the precursor; the sequence is VTYSRGEHKHR.

This sequence belongs to the conotoxin O1 superfamily. In terms of assembly, homodimer; disulfide-linked. In terms of processing, may contain 2 intrachain disulfide bonds and probably one interchain disulfide bond forming the homodimer. The disulfide pairing is not important for activity towards the different nAChR subtypes, since this peptide without disulfide bond or with different disulfide bonds shows the same activity. Expressed by the venom duct.

The protein resides in the secreted. In terms of biological role, the activity of this natural homodimer has not been tested due to low abundance. The synthetic linear peptide has been refolded, giving 4 different monomeric isomers (m1 to m4) with 2 disulfide bonds each. All isomers potently inhibit rat alpha-1-beta-1-delta-epsilon/CHRNA1-CHRNB1-CHRND-CHRNE and human alpha-9-alpha-10/CHRNA9-CHRNA10 nicotinic acetylcholine receptors (nAChR). In addition, they show a modest inhibition at human alpha-3-beta-2/CHRNA3-CHRNB2, alpha-3-beta-4/CHRNA3-CHRNB4, alpha-7/CHRNA7, and alpha-4-beta-4/CHRNA4-CHRNB4. The synthetic monomer peptide without disulfide bonds shows a potent activity on alpha-9-alpha-10/CHRNA9 and CHRNA10 (IC(50)=16.2 nM). This linear peptide does not act as a competitive antagonist, or as a channel pore blocker of nAChR. The sequence is that of O-conotoxin GeXXXIA from Conus generalis (General cone).